Reading from the N-terminus, the 424-residue chain is L-glutamine:2-deoxy-scyllo-inosose aminotransferase (424 aa).

Lys202 carries the N6-(pyridoxal phosphate)lysine modification.

It belongs to the DegT/DnrJ/EryC1 family. L-glutamine:2-deoxy-scyllo-inosose/scyllo-inosose aminotransferase subfamily. The cofactor is pyridoxal 5'-phosphate.

It carries out the reaction 2-deoxy-L-scyllo-inosose + L-glutamine = 2-deoxy-scyllo-inosamine + 2-oxoglutaramate. It catalyses the reaction 3-amino-2,3-dideoxy-scyllo-inosose + L-glutamine = 2-deoxystreptamine + 2-oxoglutaramate. It participates in metabolic intermediate biosynthesis; 2-deoxystreptamine biosynthesis; 2-deoxystreptamine from D-glucose 6-phosphate: step 2/4. The protein operates within metabolic intermediate biosynthesis; 2-deoxystreptamine biosynthesis; 2-deoxystreptamine from D-glucose 6-phosphate: step 4/4. Its pathway is antibiotic biosynthesis; neomycin biosynthesis. Its function is as follows. Catalyzes the PLP-dependent transamination of 2-deoxy-scyllo-inosose (2-DOI) to form 2-deoxy-scyllo-inosamine (2-DOIA) using L-glutamine as the amino donor. Also catalyzes the transamination of 3-amino-2,3-dideoxy-scyllo-inosose (keto-2-DOIA) into 2-deoxystreptamine (2-DOS). The polypeptide is L-glutamine:2-deoxy-scyllo-inosose aminotransferase (neoB) (Streptomyces fradiae (Streptomyces roseoflavus)).